Reading from the N-terminus, the 214-residue chain is External core antigen (214 aa).

An N-terminal signal peptide occupies residues 1–19; that stretch reads MQLFHLCLIISCTCPTVQA. The tract at residues 25 to 27 is HBEAG; it reads GWL. Residues 165 to 214 form a disordered region; that stretch reads NAPILSTLPETTVVRRRDRGRSPRRRTPSPRRRRSQSPRRRRSQSRESQC. The span at 178 to 207 shows a compositional bias: basic residues; the sequence is VRRRDRGRSPRRRTPSPRRRRSQSPRRRRS. Residues 186-192 form a 1; half-length repeat; it reads SPRRRTP. A 3 X 8 AA repeats of S-P-R-R-R-R-S-Q region spans residues 186 to 208; sequence SPRRRTPSPRRRRSQSPRRRRSQ. The propeptide occupies 186–214; the sequence is SPRRRTPSPRRRRSQSPRRRRSQSRESQC. Tandem repeats lie at residues 193–200 and 201–208.

Belongs to the orthohepadnavirus precore antigen family. Homodimerizes. Phosphorylated. In terms of processing, cleaved by host furin.

The protein localises to the secreted. Its subcellular location is the host nucleus. In terms of biological role, may regulate immune response to the intracellular capsid in acting as a T-cell tolerogen, by having an immunoregulatory effect which prevents destruction of infected cells by cytotoxic T-cells. This immune regulation may predispose to chronicity during perinatal infections and prevent severe liver injury during adult infections. This chain is External core antigen, found in Homo sapiens (Human).